A 154-amino-acid polypeptide reads, in one-letter code: MTASVDLSSYRDQHFKGSRSEQERSLRDSTTLYVGNLSFYTTEEQIHELFSRCGDVRIIVMGLDKYKKTPCGFCFVEYYTRAEAEAAMRFVNGTRLDDRLIRVDWDAGFIEGRQYGRGKTGGQVRDEYRTDYDAGRGGYGKLLSQKIAPNTDNR.

A disordered region spans residues 1–23 (MTASVDLSSYRDQHFKGSRSEQE). The span at 9–23 (SYRDQHFKGSRSEQE) shows a compositional bias: basic and acidic residues. MRNA contacts are provided by residues Y10, Y33, 102–106 (RVDWD), 113–117 (RQYGR), and 123–124 (QV). One can recognise an RRM domain in the interval 30–108 (TTLYVGNLSF…RLIRVDWDAG (79 aa)).

The protein belongs to the RRM NCBP2 family. Component of the nuclear cap-binding complex (CBC), a heterodimer composed of Cbp80 and Cbp20 that interacts with m7GpppG-capped RNA. Interacts with Ars2.

It is found in the nucleus. Component of the cap-binding complex (CBC), which binds co-transcriptionally to the 5' cap of pre-mRNAs and is involved in various processes such as pre-mRNA splicing and RNA-mediated gene silencing (RNAi). The CBC complex is involved in miRNA-mediated RNA interference via its interaction with Ars2 and is required for primary microRNAs (miRNAs) processing. Also involved in innate immunity via the short interfering RNAs (siRNAs) processing machinery by restricting the viral RNA production. In the CBC complex, Cbp20 recognizes and binds capped RNAs (m7GpppG-capped RNA) but requires Cbp80 to stabilize the movement of its N-terminal loop and lock the CBC into a high affinity cap-binding state with the cap structure. This chain is Nuclear cap-binding protein subunit 2 (Cbp20), found in Drosophila grimshawi (Hawaiian fruit fly).